The chain runs to 464 residues: UDP-N-acetylmuramoylalanine--D-glutamate ligase (464 aa).

112 to 118 (GTDGKTT) contributes to the ATP binding site.

Belongs to the MurCDEF family.

The protein localises to the cytoplasm. It carries out the reaction UDP-N-acetyl-alpha-D-muramoyl-L-alanine + D-glutamate + ATP = UDP-N-acetyl-alpha-D-muramoyl-L-alanyl-D-glutamate + ADP + phosphate + H(+). Its pathway is cell wall biogenesis; peptidoglycan biosynthesis. Cell wall formation. Catalyzes the addition of glutamate to the nucleotide precursor UDP-N-acetylmuramoyl-L-alanine (UMA). This is UDP-N-acetylmuramoylalanine--D-glutamate ligase from Chlorobium chlorochromatii (strain CaD3).